Consider the following 312-residue polypeptide: Probable HTH-type transcriptional regulator LrhA (312 aa).

The 58-residue stretch at Leu-11–Thr-68 folds into the HTH lysR-type domain. The segment at residues Phe-28–Gln-47 is a DNA-binding region (H-T-H motif).

It belongs to the LysR transcriptional regulatory family.

Functionally, not known, does not seem to act on the proton translocating NADH dehydrogenase genes (nuoA-N) which are part of the lrhA operon. This chain is Probable HTH-type transcriptional regulator LrhA (lrhA), found in Escherichia coli (strain K12).